A 536-amino-acid polypeptide reads, in one-letter code: Zinc finger CCCH domain-containing protein 18 (536 aa).

A C3H1-type zinc finger spans residues 156-183 (EFPVKICHYFNKGFCKHGNNCRYFHGQI). An HTH OST-type domain is found at 211-294 (SLEKLEGEII…HGQHSVILAE (84 aa)). One can recognise an RRM domain in the interval 317 to 392 (RQIYLTFPAE…ARVLVKPYRE (76 aa)).

Its function is as follows. Possesses ribonuclease activity in vitro. The protein is Zinc finger CCCH domain-containing protein 18 of Arabidopsis thaliana (Mouse-ear cress).